Here is a 385-residue protein sequence, read N- to C-terminus: Alkanesulfonate monooxygenase (385 aa).

Belongs to the SsuD family.

It catalyses the reaction an alkanesulfonate + FMNH2 + O2 = an aldehyde + FMN + sulfite + H2O + 2 H(+). Functionally, catalyzes the desulfonation of aliphatic sulfonates. This Paraburkholderia phymatum (strain DSM 17167 / CIP 108236 / LMG 21445 / STM815) (Burkholderia phymatum) protein is Alkanesulfonate monooxygenase.